The chain runs to 237 residues: Nodulation protein NolA (237 aa).

Residues 10–79 (RWRIGELAGA…LQEIRRAMDG (70 aa)) enclose the HTH merR-type domain. Positions 13–32 (IGELAGATGVTVRTLHHYEH) form a DNA-binding region, H-T-H motif.

Its function is as follows. Involved in genotype-specific nodulation of soybeans. The chain is Nodulation protein NolA (nolA) from Bradyrhizobium sp. (strain NC92).